The following is a 191-amino-acid chain: Thymidine kinase (191 aa).

ATP-binding positions include 15–22 (GSMFSGKS) and 88–91 (DEVQ). Residue Glu-89 is the Proton acceptor of the active site. Cys-145, Cys-148, Cys-183, and His-186 together coordinate Zn(2+).

This sequence belongs to the thymidine kinase family. As to quaternary structure, homotetramer.

The protein resides in the cytoplasm. The catalysed reaction is thymidine + ATP = dTMP + ADP + H(+). This is Thymidine kinase from Macrococcus caseolyticus (strain JCSC5402) (Macrococcoides caseolyticum).